Consider the following 412-residue polypeptide: Palmitoyltransferase ZDHHC6 (412 aa).

Topologically, residues 1–24 (MNILSAIIVFENLHEVKRLFHWGP) are cytoplasmic. The chain crosses the membrane as a helical span at residues 25 to 45 (IIALTVIGVCSSMAILDSIIW). The Lumenal segment spans residues 46 to 57 (YWPLDTTGGSIN). Residues 58–78 (FIMLINWTVLILYNYFNAMFV) traverse the membrane as a helical segment. Residues 79–143 (GPGYIPLEWK…NCCGHLNHAY (65 aa)) lie on the Cytoplasmic side of the membrane. In terms of domain architecture, DHHC spans 99–149 (QFCRLCQGYKAPRSHHCRKCNRCVMKMDHHCPWINNCCGHLNHAYFTSFLL). Cys-129 serves as the catalytic S-palmitoyl cysteine intermediate. Residues 144–164 (FTSFLLLAPLGCIHAALIFIM) traverse the membrane as a helical segment. Topologically, residues 165 to 205 (TMYTQLYDRISFGWSSVKIDMSAARHIHHPIMPFSIAAFAA) are lumenal. A helical membrane pass occupies residues 206–226 (TLFALGLALGTTIAVGMLFFI). The Cytoplasmic portion of the chain corresponds to 227 to 412 (QMKVILRNRT…NSTSEEKKEQ (186 aa)). The SH3 domain maps to 313 to 398 (QRSVEYRVVE…PRRCVEKCLY (86 aa)). Residues Cys-328, Cys-329, and Cys-343 are each lipidated (S-palmitoyl cysteine). A Di-lysine motif motif is present at residues 409 to 412 (KKEQ).

This sequence belongs to the DHHC palmitoyltransferase family.

It localises to the endoplasmic reticulum membrane. The catalysed reaction is L-cysteinyl-[protein] + hexadecanoyl-CoA = S-hexadecanoyl-L-cysteinyl-[protein] + CoA. It carries out the reaction L-cysteinyl-[protein] + octadecanoyl-CoA = S-octadecanoyl-L-cysteinyl-[protein] + CoA. Functionally, endoplasmic reticulum palmitoyl acyltransferase that probably catalyzes the addition of palmitate onto various protein substrates and is involved in a variety of cellular processes. Could also function as a stearoyltransferase. The protein is Palmitoyltransferase ZDHHC6 of Danio rerio (Zebrafish).